We begin with the raw amino-acid sequence, 439 residues long: Proline--tRNA ligase (439 aa).

Belongs to the class-II aminoacyl-tRNA synthetase family. ProS type 2 subfamily. As to quaternary structure, homodimer.

Its subcellular location is the cytoplasm. It catalyses the reaction tRNA(Pro) + L-proline + ATP = L-prolyl-tRNA(Pro) + AMP + diphosphate. In terms of biological role, catalyzes the attachment of proline to tRNA(Pro) in a two-step reaction: proline is first activated by ATP to form Pro-AMP and then transferred to the acceptor end of tRNA(Pro). The sequence is that of Proline--tRNA ligase from Phenylobacterium zucineum (strain HLK1).